The following is a 405-amino-acid chain: Double C2-like domain-containing protein alpha (405 aa).

The interaction with UNC13D and DYNLT1 stretch occupies residues 1–94 (MRGRRGDRMT…DSYDSDDTTA (94 aa)). Residues 34–54 (DYFPRRGPGPEGGGGGGGTGC) are disordered. Gly residues predominate over residues 42 to 54 (GPEGGGGGGGTGC). 2 consecutive C2 domains span residues 94–216 (ALGT…HFNI) and 256–389 (ERGR…ERWH). Ca(2+) is bound by residues Asp-125, Asp-131, Asp-186, Asp-188, Asp-287, Asp-293, Asp-347, Asp-349, and Asp-355. The interval 220–405 (RQVPLPSPSS…PPAAGAYPLA (186 aa)) is interaction with UNC13D.

Interacts (via N-terminus) with UNC13A. Interacts with cytoplasmic dynein light chain DYNLT1. Interacts with UNC13D. Ca(2+) is required as a cofactor. In terms of tissue distribution, brain and mast cells.

The protein localises to the cytoplasmic vesicle. It localises to the secretory vesicle. Its subcellular location is the synaptic vesicle membrane. It is found in the synapse. The protein resides in the synaptosome. The protein localises to the lysosome. Calcium sensor which most probably regulates fusion of vesicles with membranes. Binds calcium and phospholipids. May be involved in calcium dependent neurotransmitter release through the interaction with UNC13A. May be involved in calcium-dependent spontaneous release of neurotransmitter in absence of action potentials in neuronal cells. Regulates Ca(2+)-dependent secretory lysosome exocytosis in mast cells. The sequence is that of Double C2-like domain-containing protein alpha (Doc2a) from Mus musculus (Mouse).